An 802-amino-acid chain; its full sequence is Bifunctional purine biosynthetic protein ADE5,7 (802 aa).

The interval 1 to 444 (MPEITAFPQP…FRRDIAYRAL (444 aa)) is GARS. The ATP-grasp domain maps to 126–339 (KEFMARHNIP…LAEVLLACVE (214 aa)). 157 to 218 (KPFTSGRSVI…EEYLSGPEIS (62 aa)) provides a ligand contact to ATP. Glutamate 307 and asparagine 309 together coordinate Mg(2+). Residues 455–788 (LTYAAAGVSV…EAWVIGEVQE (334 aa)) form an AIRS region.

It in the N-terminal section; belongs to the GARS family. The protein in the C-terminal section; belongs to the AIR synthase family. As to quaternary structure, homodimer. Mg(2+) is required as a cofactor. It depends on Mn(2+) as a cofactor.

It localises to the cytoplasm. It is found in the cytosol. It catalyses the reaction 2-formamido-N(1)-(5-O-phospho-beta-D-ribosyl)acetamidine + ATP = 5-amino-1-(5-phospho-beta-D-ribosyl)imidazole + ADP + phosphate + H(+). The catalysed reaction is 5-phospho-beta-D-ribosylamine + glycine + ATP = N(1)-(5-phospho-beta-D-ribosyl)glycinamide + ADP + phosphate + H(+). It participates in purine metabolism; IMP biosynthesis via de novo pathway; 5-amino-1-(5-phospho-D-ribosyl)imidazole from N(2)-formyl-N(1)-(5-phospho-D-ribosyl)glycinamide: step 2/2. Its pathway is purine metabolism; IMP biosynthesis via de novo pathway; N(1)-(5-phospho-D-ribosyl)glycinamide from 5-phospho-alpha-D-ribose 1-diphosphate: step 2/2. In terms of biological role, catalyzes the second and fifth step in the 'de novo' purine biosynthesis pathway; contains phosphoribosylamine--glycine ligase (GARS) and phosphoribosylformylglycinamidine cyclo-ligase (AIRS) activities. This is Bifunctional purine biosynthetic protein ADE5,7 from Cryptococcus neoformans var. grubii serotype A (strain H99 / ATCC 208821 / CBS 10515 / FGSC 9487) (Filobasidiella neoformans var. grubii).